A 431-amino-acid chain; its full sequence is Tryptophan synthase beta chain 2 (431 aa).

Lysine 111 bears the N6-(pyridoxal phosphate)lysine mark.

Belongs to the TrpB family. As to quaternary structure, tetramer of two alpha and two beta chains. Requires pyridoxal 5'-phosphate as cofactor.

The enzyme catalyses (1S,2R)-1-C-(indol-3-yl)glycerol 3-phosphate + L-serine = D-glyceraldehyde 3-phosphate + L-tryptophan + H2O. It participates in amino-acid biosynthesis; L-tryptophan biosynthesis; L-tryptophan from chorismate: step 5/5. The beta subunit is responsible for the synthesis of L-tryptophan from indole and L-serine. This chain is Tryptophan synthase beta chain 2 (trpB2), found in Sulfurisphaera tokodaii (strain DSM 16993 / JCM 10545 / NBRC 100140 / 7) (Sulfolobus tokodaii).